Consider the following 322-residue polypeptide: Pantothenate kinase (322 aa).

100–107 (GSVAVGKS) provides a ligand contact to ATP.

This sequence belongs to the prokaryotic pantothenate kinase family.

Its subcellular location is the cytoplasm. The catalysed reaction is (R)-pantothenate + ATP = (R)-4'-phosphopantothenate + ADP + H(+). It participates in cofactor biosynthesis; coenzyme A biosynthesis; CoA from (R)-pantothenate: step 1/5. This Agrobacterium fabrum (strain C58 / ATCC 33970) (Agrobacterium tumefaciens (strain C58)) protein is Pantothenate kinase.